We begin with the raw amino-acid sequence, 172 residues long: Cold-inducible RNA-binding protein (172 aa).

The RRM domain maps to 6–84 (GKLFVGGLSF…RQIRVDQAGK (79 aa)). The disordered stretch occupies residues 69-172 (GKSVDGRQIR…SYDSYATHNE (104 aa)). Composition is skewed to gly residues over residues 93–106 (YRGGSAGGRGFFRG) and 114–125 (FSRGGGDRGYGG). Phosphoserine is present on residues Ser-130, Ser-138, Ser-146, Ser-156, Ser-159, and Ser-163. Over residues 138-172 (SRDYYSSRSQSGGYSDRSSGGSYRDSYDSYATHNE) the composition is skewed to low complexity.

As to quaternary structure, interacts with EIF4G1. Associates with ribosomes. In terms of processing, methylated on arginine residues. Methylation of the RGG motifs is a prerequisite for recruitment into SGs. Phosphorylated by CK2, GSK3A and GSK3B. Phosphorylation by GSK3B increases RNA-binding activity to the TXN 3'-UTR transcript upon exposure to UV radiation.

The protein resides in the nucleus. The protein localises to the nucleoplasm. It is found in the cytoplasm. In terms of biological role, cold-inducible mRNA binding protein that plays a protective role in the genotoxic stress response by stabilizing transcripts of genes involved in cell survival. Acts as a translational activator. Seems to play an essential role in cold-induced suppression of cell proliferation. Binds specifically to the 3'-untranslated regions (3'-UTRs) of stress-responsive transcripts RPA2 and TXN. Acts as a translational repressor. Promotes assembly of stress granules (SGs), when overexpressed. The sequence is that of Cold-inducible RNA-binding protein (CIRBP) from Pongo abelii (Sumatran orangutan).